Consider the following 446-residue polypeptide: MQKKYFGTDGIRGKVGNSLINAEFMLKLGWAVGRVLANSHSATVLIGKDTRISGYMIESALQAGLSAAGVNIKLTGPMPTPAIAYLTNSVRADAGIVISASHNHYPDNGVKFFNKDGFKLSDELELAIEKQIDKPMKTVVADRLGKAARMNEAHGRYIEFCKSTFPSNLTLKGLKIVVDCANGAAYAVAPSIFHELGAEVVAIADDPDGFNINQTCGATDTAHLQEMVVKHNADVGIAFDGDGDRLIMVDHHGLRVDGDELLCIMAIDRFYLKENAPLGVVGTIMSNLGLEQTLKRHHIAFERSPVGDRYVLDLMQQKGWFLGGESSGHIVDLGFTTTGDGVITALQILRIMQQAEKPLADLKKVMVKNPQVLINVPIKGILDIAQNPNIKKAITEAEKQLNGAGRILLRPSGTEPVIRVMVEGSDEGIVRQTAEMLAAAVQQSTL.

The active-site Phosphoserine intermediate is the serine 101. The Mg(2+) site is built by serine 101, aspartate 240, aspartate 242, and aspartate 244. A Phosphoserine modification is found at serine 101.

It belongs to the phosphohexose mutase family. Mg(2+) serves as cofactor. Post-translationally, activated by phosphorylation.

The enzyme catalyses alpha-D-glucosamine 1-phosphate = D-glucosamine 6-phosphate. Functionally, catalyzes the conversion of glucosamine-6-phosphate to glucosamine-1-phosphate. The chain is Phosphoglucosamine mutase from Coxiella burnetii (strain Dugway 5J108-111).